The following is a 417-amino-acid chain: Glucose-1-phosphatase (417 aa).

A signal peptide spans 1–23 (MKYKVLTLCLSAALFAPIAPTMA). Residue Arg-41 coordinates substrate. His-42 acts as the Nucleophile in catalysis. Substrate contacts are provided by Arg-45, Arg-118, and Glu-220. Catalysis depends on Asp-315, which acts as the Proton donor.

Belongs to the histidine acid phosphatase family. Homodimer.

The protein resides in the periplasm. The enzyme catalyses alpha-D-glucose 1-phosphate + H2O = D-glucose + phosphate. The chain is Glucose-1-phosphatase (agp) from Providencia rettgeri.